The sequence spans 289 residues: Glucosamine-6-phosphate deaminase 1 (289 aa).

The active-site Proton acceptor; for enolization step is the D72. The active-site For ring-opening step is D141. H143 functions as the Proton acceptor; for ring-opening step in the catalytic mechanism. Catalysis depends on E148, which acts as the For ring-opening step. Residue T161 is modified to Phosphothreonine.

The protein belongs to the glucosamine/galactosamine-6-phosphate isomerase family. In terms of assembly, homohexamer. Widely expressed. Detected in brain, liver, kidney, muscle, ovary, testis, spermatids and spermatozoa. In spermatids, located close to the developing acrosome vesicle. In spermatozoa, found close to the acrosomal region.

Its subcellular location is the cytoplasm. The enzyme catalyses alpha-D-glucosamine 6-phosphate + H2O = beta-D-fructose 6-phosphate + NH4(+). It functions in the pathway nucleotide-sugar biosynthesis; UDP-N-acetyl-alpha-D-glucosamine biosynthesis; alpha-D-glucosamine 6-phosphate from D-fructose 6-phosphate: step 1/1. Allosterically activated by N-acetylglucosamine-6-phosphate (GlcNAc6P). In terms of biological role, catalyzes the reversible conversion of alpha-D-glucosamine 6-phosphate (GlcN-6P) into beta-D-fructose 6-phosphate (Fru-6P) and ammonium ion, a regulatory reaction step in de novo uridine diphosphate-N-acetyl-alpha-D-glucosamine (UDP-GlcNAc) biosynthesis via hexosamine pathway. Deamination is coupled to aldo-keto isomerization mediating the metabolic flux from UDP-GlcNAc toward Fru-6P. At high ammonium level can drive amination and isomerization of Fru-6P toward hexosamines and UDP-GlcNAc synthesis. Has a role in fine tuning the metabolic fluctuations of cytosolic UDP-GlcNAc and their effects on hyaluronan synthesis that occur during tissue remodeling. Seems to trigger calcium oscillations in mammalian eggs. These oscillations serve as the essential trigger for egg activation and early development of the embryo. The protein is Glucosamine-6-phosphate deaminase 1 of Mus musculus (Mouse).